The chain runs to 233 residues: Ribose-5-phosphate isomerase A (233 aa).

Substrate contacts are provided by residues 28 to 31, 83 to 86, and 96 to 99; these read SGST, DGAD, and KGGG. Glu105 serves as the catalytic Proton acceptor. Lys123 contributes to the substrate binding site.

This sequence belongs to the ribose 5-phosphate isomerase family. As to quaternary structure, homodimer.

The enzyme catalyses aldehydo-D-ribose 5-phosphate = D-ribulose 5-phosphate. Its pathway is carbohydrate degradation; pentose phosphate pathway; D-ribose 5-phosphate from D-ribulose 5-phosphate (non-oxidative stage): step 1/1. In terms of biological role, catalyzes the reversible conversion of ribose-5-phosphate to ribulose 5-phosphate. In Maricaulis maris (strain MCS10) (Caulobacter maris), this protein is Ribose-5-phosphate isomerase A.